A 91-amino-acid polypeptide reads, in one-letter code: Probable Fe(2+)-trafficking protein (91 aa).

It belongs to the Fe(2+)-trafficking protein family.

In terms of biological role, could be a mediator in iron transactions between iron acquisition and iron-requiring processes, such as synthesis and/or repair of Fe-S clusters in biosynthetic enzymes. The chain is Probable Fe(2+)-trafficking protein from Burkholderia ambifaria (strain MC40-6).